The sequence spans 102 residues: U3-aranetoxin-Ce1a (102 aa).

Positions 1 to 21 (MKHLSIFFVFFCCICVMLCDA) are cleaved as a signal peptide.

It belongs to the neurotoxin 20 family. Expressed by the venom gland.

Its subcellular location is the secreted. This chain is U3-aranetoxin-Ce1a, found in Caerostris extrusa (Bark spider).